The following is a 1697-amino-acid chain: UDP-sugar-dependent glycosyltransferase 52 (1697 aa).

2 disordered regions span residues 20–40 and 142–166; these read HSDSLSSVGSSSNRSNSNYEN and STDLSNIKTTTTTTTTTTPPPLMIP. The PH domain occupies 234–332; the sequence is DYVLENYLYK…WYHEINRMQK (99 aa). Disordered regions lie at residues 573–645 and 707–756; these read FRSK…TTHE and PLDK…KQSQ. Low complexity-rich tracts occupy residues 584 to 628 and 711 to 722; these read QNSQ…SSSA and QQQQQQQQQQQQ. 2 consecutive GRAM domains span residues 658 to 793 and 881 to 948; these read STFH…TKER and IKIK…KKYS. The span at 739 to 749 shows a compositional bias: acidic residues; it reads TDSDTDSESDF. 4 disordered regions span residues 1011–1047, 1062–1085, 1110–1130, and 1466–1488; these read SPSIASPSITPPSSTPPSSTTPSSTTPTITSPTIHST, DGENNSNNNNNNNNTNNTNKSNSF, SAQQQQQQQPKTTTTTTSTTT, and EHNNNNNNNNNNNNGENSDSNKS. Composition is skewed to low complexity over residues 1026–1047, 1065–1084, 1112–1130, and 1469–1479; these read PPSSTTPSSTTPTITSPTIHST, NNSNNNNNNNNTNNTNKSNS, QQQQQQQPKTTTTTTSTTT, and NNNNNNNNNNN. The segment at 1622-1685 adopts an FYVE-type zinc-finger fold; the sequence is SSAPNSCMGC…VCDKCFNDLQ (64 aa). Cys1628, Cys1631, Cys1647, Cys1650, Cys1655, Cys1658, Cys1677, and Cys1680 together coordinate Zn(2+).

Belongs to the glycosyltransferase 28 family.

It carries out the reaction a sterol + UDP-alpha-D-glucose = a sterol 3-beta-D-glucoside + UDP + H(+). Involved in the biosynthesis of sterol glucoside. Can use different sterols such as cholesterol, sitosterol, and ergosterol as sugar acceptors. The protein is UDP-sugar-dependent glycosyltransferase 52 (ugt52) of Dictyostelium discoideum (Social amoeba).